A 118-amino-acid chain; its full sequence is MTALTQAHCEACRADAPHVSDEELPVLLRQIPDWNIEVRDGIMQLEKVYLFKNFRHALAFTNAIGEISEAEGHHPGLLTEWGKVTVTWWSHSIKGLHRNDFIMAARTDEVAKTAEGRK.

The protein belongs to the pterin-4-alpha-carbinolamine dehydratase family.

The enzyme catalyses (4aS,6R)-4a-hydroxy-L-erythro-5,6,7,8-tetrahydrobiopterin = (6R)-L-erythro-6,7-dihydrobiopterin + H2O. This chain is Putative pterin-4-alpha-carbinolamine dehydratase, found in Pseudomonas paraeruginosa (strain DSM 24068 / PA7) (Pseudomonas aeruginosa (strain PA7)).